The sequence spans 462 residues: tRNA modification GTPase MnmE (462 aa).

R23, E88, and R127 together coordinate (6S)-5-formyl-5,6,7,8-tetrahydrofolate. The TrmE-type G domain occupies G224–F383. N234 serves as a coordination point for K(+). GTP is bound by residues N234–S239, T253–T259, and D278–G281. S238 contacts Mg(2+). K(+)-binding residues include T253, I255, and T258. Position 259 (T259) interacts with Mg(2+). K462 lines the (6S)-5-formyl-5,6,7,8-tetrahydrofolate pocket.

This sequence belongs to the TRAFAC class TrmE-Era-EngA-EngB-Septin-like GTPase superfamily. TrmE GTPase family. In terms of assembly, homodimer. Heterotetramer of two MnmE and two MnmG subunits. The cofactor is K(+).

The protein resides in the cytoplasm. Its function is as follows. Exhibits a very high intrinsic GTPase hydrolysis rate. Involved in the addition of a carboxymethylaminomethyl (cmnm) group at the wobble position (U34) of certain tRNAs, forming tRNA-cmnm(5)s(2)U34. The protein is tRNA modification GTPase MnmE of Geobacillus kaustophilus (strain HTA426).